The chain runs to 418 residues: Probable serine/threonine-protein kinase DDB_G0280461 (418 aa).

A Protein kinase domain is found at 14–271 (KIEENEFSKG…IVQTLDQLAI (258 aa)). Residues 20–28 (FSKGSFAKV) and Lys-41 each bind ATP. The Proton acceptor role is filled by Asp-139. Disordered regions lie at residues 327–356 (NNNN…NNNN) and 377–418 (SVNS…CLIN). Residues 377–402 (SVNSSFSNSSLGSNGSNSSGTSTSSG) show a composition bias toward low complexity. The segment covering 403 to 418 (GKKRSQKRKSWKCLIN) has biased composition (basic residues).

This sequence belongs to the protein kinase superfamily. TKL Ser/Thr protein kinase family.

It carries out the reaction L-seryl-[protein] + ATP = O-phospho-L-seryl-[protein] + ADP + H(+). It catalyses the reaction L-threonyl-[protein] + ATP = O-phospho-L-threonyl-[protein] + ADP + H(+). This Dictyostelium discoideum (Social amoeba) protein is Probable serine/threonine-protein kinase DDB_G0280461.